The sequence spans 246 residues: Small ribosomal subunit protein uS3A (246 aa).

A KH type-2 domain is found at Leu21–Ala92. A disordered region spans residues Asp215 to Ala246.

The protein belongs to the universal ribosomal protein uS3 family.

It localises to the cytoplasm. The protein resides in the nucleus. The protein localises to the nucleolus. Its subcellular location is the mitochondrion inner membrane. It is found in the cytoskeleton. It localises to the spindle. The enzyme catalyses 2'-deoxyribonucleotide-(2'-deoxyribose 5'-phosphate)-2'-deoxyribonucleotide-DNA = a 3'-end 2'-deoxyribonucleotide-(2,3-dehydro-2,3-deoxyribose 5'-phosphate)-DNA + a 5'-end 5'-phospho-2'-deoxyribonucleoside-DNA + H(+). Functionally, component of the small ribosomal subunit. The ribosome is a large ribonucleoprotein complex responsible for the synthesis of proteins in the cell. Has endonuclease activity and plays a role in repair of damaged DNA. Also involved in other processes including regulation of transcription, translation of its cognate mRNA, spindle formation and chromosome movement during mitosis, and apoptosis. This Xenopus laevis (African clawed frog) protein is Small ribosomal subunit protein uS3A (rps3-a).